Consider the following 210-residue polypeptide: MKGKFIVLEGLEGAGKTTALHTVVEQLRSLGITDLVFTREPGGTPLAEKLRQLIKHETEEPVTDKAELLMLYAARIQLVENVIKPALAAGKWVIGDRHDLSSQAYQGGGRGLDRHFMQTLKDSVLGGFEPDFTLYLDIEPAEGLARARGRGELDRIEQAGLDFFNRTRTRYLELVRDNPKAVVINARQNIERVTADIQSAVKKFVESQHG.

10–17 (GLEGAGKT) is an ATP binding site.

The protein belongs to the thymidylate kinase family.

It catalyses the reaction dTMP + ATP = dTDP + ADP. In terms of biological role, phosphorylation of dTMP to form dTDP in both de novo and salvage pathways of dTTP synthesis. The sequence is that of Thymidylate kinase from Actinobacillus succinogenes (strain ATCC 55618 / DSM 22257 / CCUG 43843 / 130Z).